We begin with the raw amino-acid sequence, 571 residues long: UvrABC system protein C (571 aa).

Positions 15-93 constitute a GIY-YIG domain; the sequence is TSPGVYLWKD…IDRYNPEFNI (79 aa). One can recognise a UVR domain in the interval 184-219; it reads NNYINELTNKMHQAANNMQFELALFLRDGLTYLKKL.

This sequence belongs to the UvrC family. As to quaternary structure, interacts with UvrB in an incision complex.

It is found in the cytoplasm. Its function is as follows. The UvrABC repair system catalyzes the recognition and processing of DNA lesions. UvrC both incises the 5' and 3' sides of the lesion. The N-terminal half is responsible for the 3' incision and the C-terminal half is responsible for the 5' incision. The sequence is that of UvrABC system protein C from Mycoplasmopsis bovis (strain ATCC 25523 / DSM 22781 / NCTC 10131 / PG45) (Mycoplasma bovis).